The chain runs to 648 residues: Biosynthetic arginine decarboxylase (648 aa).

Lysine 109 carries the post-translational modification N6-(pyridoxal phosphate)lysine. Substrate is bound at residue 291–301 (LDVGGGLGVDY).

Belongs to the Orn/Lys/Arg decarboxylase class-II family. SpeA subfamily. Requires Mg(2+) as cofactor. Pyridoxal 5'-phosphate is required as a cofactor.

The enzyme catalyses L-arginine + H(+) = agmatine + CO2. Its function is as follows. Catalyzes the biosynthesis of agmatine from arginine. This chain is Biosynthetic arginine decarboxylase, found in Prochlorococcus marinus (strain SARG / CCMP1375 / SS120).